A 192-amino-acid chain; its full sequence is UPF0312 protein Ent638_1570 (192 aa).

Positions 1–22 are cleaved as a signal peptide; sequence MKKRLLGIALGSLLFTTGSAVA.

The protein belongs to the UPF0312 family. Type 1 subfamily.

It localises to the periplasm. This is UPF0312 protein Ent638_1570 from Enterobacter sp. (strain 638).